Here is a 186-residue protein sequence, read N- to C-terminus: NADH-dependent FMN reductase SfnF (186 aa).

Belongs to the SsuE family.

It carries out the reaction FMNH2 + NAD(+) = FMN + NADH + 2 H(+). Involved in the dimethyl sulfide degradation pathway. Catalyzes the NADH-dependent reduction of FMN. This is NADH-dependent FMN reductase SfnF from Pseudomonas putida (Arthrobacter siderocapsulatus).